The following is a 193-amino-acid chain: Probable GTP-binding protein EngB (193 aa).

Residues serine 22–glutamine 193 enclose the EngB-type G domain. GTP contacts are provided by residues glycine 30–serine 37, glycine 57–leucine 61, aspartate 75–glycine 78, threonine 142–aspartate 145, and tyrosine 172–serine 174. Residues serine 37 and threonine 59 each contribute to the Mg(2+) site.

This sequence belongs to the TRAFAC class TrmE-Era-EngA-EngB-Septin-like GTPase superfamily. EngB GTPase family. Mg(2+) serves as cofactor.

In terms of biological role, necessary for normal cell division and for the maintenance of normal septation. This Pelodictyon phaeoclathratiforme (strain DSM 5477 / BU-1) protein is Probable GTP-binding protein EngB.